We begin with the raw amino-acid sequence, 407 residues long: Multidrug resistance protein MdtH (407 aa).

10 consecutive transmembrane segments (helical) span residues 13-33, 88-108, 139-159, 163-183, 210-230, 247-267, 277-297, 298-318, 340-360, and 368-388; these read CFLIIDNMFVVIGFYVVFPLI, LGFIIMSVANTPLLLCLSCML, VLMLEDSMCAIIGIVLGTWLL, FKLVCFTGAILFFIAGVFNAW, FVIYVFTLTGYYILSAQVMLM, WMYIIEAILSLLLIMPITWWS, LMVGLITMIISLFPIGLVKNL, HTLLILISLFYIGSIIAEPAR, LSLALGGTVGYSGSGWLYDIG, and LPWIILSIIGLITLLGLYCQF.

It belongs to the major facilitator superfamily. DHA1 family. MdtH (TC 2.A.1.2.21) subfamily.

Its subcellular location is the cell inner membrane. The polypeptide is Multidrug resistance protein MdtH (Blochmanniella pennsylvanica (strain BPEN)).